The primary structure comprises 231 residues: 7-cyano-7-deazaguanine synthase (231 aa).

8 to 18 (FSGGQDSTTCL) is an ATP binding site. The Zn(2+) site is built by C187, C196, C199, and C202.

The protein belongs to the QueC family. Zn(2+) serves as cofactor.

It catalyses the reaction 7-carboxy-7-deazaguanine + NH4(+) + ATP = 7-cyano-7-deazaguanine + ADP + phosphate + H2O + H(+). It functions in the pathway purine metabolism; 7-cyano-7-deazaguanine biosynthesis. In terms of biological role, catalyzes the ATP-dependent conversion of 7-carboxy-7-deazaguanine (CDG) to 7-cyano-7-deazaguanine (preQ(0)). This Vibrio vulnificus (strain CMCP6) protein is 7-cyano-7-deazaguanine synthase.